We begin with the raw amino-acid sequence, 544 residues long: Chaperonin GroEL (544 aa).

ATP contacts are provided by residues 29–32 (TLGP), lysine 50, 86–90 (DGTTT), glycine 414, 479–481 (DAA), and aspartate 495.

The protein belongs to the chaperonin (HSP60) family. Forms a cylinder of 14 subunits composed of two heptameric rings stacked back-to-back. Interacts with the co-chaperonin GroES.

The protein resides in the cytoplasm. It catalyses the reaction ATP + H2O + a folded polypeptide = ADP + phosphate + an unfolded polypeptide.. Together with its co-chaperonin GroES, plays an essential role in assisting protein folding. The GroEL-GroES system forms a nano-cage that allows encapsulation of the non-native substrate proteins and provides a physical environment optimized to promote and accelerate protein folding. In Treponema denticola (strain ATCC 35405 / DSM 14222 / CIP 103919 / JCM 8153 / KCTC 15104), this protein is Chaperonin GroEL.